Consider the following 378-residue polypeptide: Protein RecA (378 aa).

79–86 (GPESSGKT) provides a ligand contact to ATP.

This sequence belongs to the RecA family.

The protein resides in the cytoplasm. Functionally, can catalyze the hydrolysis of ATP in the presence of single-stranded DNA, the ATP-dependent uptake of single-stranded DNA by duplex DNA, and the ATP-dependent hybridization of homologous single-stranded DNAs. It interacts with LexA causing its activation and leading to its autocatalytic cleavage. The sequence is that of Protein RecA from Streptococcus pyogenes serotype M2 (strain MGAS10270).